The following is a 122-amino-acid chain: Ribosome-binding factor A (122 aa).

It belongs to the RbfA family. Monomer. Binds 30S ribosomal subunits, but not 50S ribosomal subunits or 70S ribosomes.

The protein localises to the cytoplasm. Functionally, one of several proteins that assist in the late maturation steps of the functional core of the 30S ribosomal subunit. Associates with free 30S ribosomal subunits (but not with 30S subunits that are part of 70S ribosomes or polysomes). Required for efficient processing of 16S rRNA. May interact with the 5'-terminal helix region of 16S rRNA. This chain is Ribosome-binding factor A, found in Cupriavidus necator (strain ATCC 17699 / DSM 428 / KCTC 22496 / NCIMB 10442 / H16 / Stanier 337) (Ralstonia eutropha).